The chain runs to 312 residues: Cytochrome f (312 aa).

The signal sequence occupies residues 1 to 30 (MYLSKNFFLNLKTFIFSFFVLCFFSQSAQA). Heme is bound by residues tyrosine 31, cysteine 51, cysteine 54, and histidine 55. Residues 278 to 298 (VQGLLLFSLFILLAQIFLVLK) form a helical membrane-spanning segment.

The protein belongs to the cytochrome f family. As to quaternary structure, the 4 large subunits of the cytochrome b6-f complex are cytochrome b6, subunit IV (17 kDa polypeptide, petD), cytochrome f and the Rieske protein, while the 4 small subunits are PetG, PetL, PetM and PetN. The complex functions as a dimer. Requires heme as cofactor.

It is found in the plastid. The protein localises to the chloroplast thylakoid membrane. Component of the cytochrome b6-f complex, which mediates electron transfer between photosystem II (PSII) and photosystem I (PSI), cyclic electron flow around PSI, and state transitions. The polypeptide is Cytochrome f (petA) (Bigelowiella natans (Pedinomonas minutissima)).